The following is a 359-amino-acid chain: 3-dehydroquinate synthase (359 aa).

NAD(+)-binding positions include 71–76 (DGEQFK), 105–109 (GVIGD), 129–130 (TT), lysine 142, lysine 151, and 169–172 (CLQT). 3 residues coordinate Zn(2+): glutamate 184, histidine 247, and histidine 264.

The protein belongs to the sugar phosphate cyclases superfamily. Dehydroquinate synthase family. NAD(+) serves as cofactor. It depends on Co(2+) as a cofactor. Requires Zn(2+) as cofactor.

The protein localises to the cytoplasm. It catalyses the reaction 7-phospho-2-dehydro-3-deoxy-D-arabino-heptonate = 3-dehydroquinate + phosphate. The protein operates within metabolic intermediate biosynthesis; chorismate biosynthesis; chorismate from D-erythrose 4-phosphate and phosphoenolpyruvate: step 2/7. Functionally, catalyzes the conversion of 3-deoxy-D-arabino-heptulosonate 7-phosphate (DAHP) to dehydroquinate (DHQ). The sequence is that of 3-dehydroquinate synthase from Shewanella oneidensis (strain ATCC 700550 / JCM 31522 / CIP 106686 / LMG 19005 / NCIMB 14063 / MR-1).